A 361-amino-acid chain; its full sequence is Innexin inx1 (361 aa).

Residues 1–28 lie on the Cytoplasmic side of the membrane; it reads MYKLLGGLKEYLKWQDIVTDNAIFRLHN. The chain crosses the membrane as a helical span at residues 29–49; it reads LFTTVLLLTCSLIITATQYVG. The Extracellular portion of the chain corresponds to 50–109; sequence NPIHCIVNGLPVRPINTYCWITSTFTMPDAFLRQVGSEVAHPGVANDFGDEDAKKYYTYY. A helical transmembrane segment spans residues 110 to 130; that stretch reads QWVCFVLFFQAMLCYTPKWIW. Over 131 to 181 the chain is Cytoplasmic; it reads DSIEGGLLRTLIMGLNRGLCQDDEKCMKKKALIEYLLRHIKRHNMYALKYW. Residues 182 to 202 traverse the membrane as a helical segment; sequence FCETLCLVNIIGQLYLMNHFF. Topologically, residues 203 to 267 are extracellular; it reads DGEFFSYGLR…LPLNIVNEKT (65 aa). Residues 268 to 288 traverse the membrane as a helical segment; that stretch reads YIFLWFWYIILAALLSVLVVY. At 289–361 the chain is on the cytoplasmic side; that stretch reads RAVILAVPSV…KIETPSSNNP (73 aa).

This sequence belongs to the pannexin family. In terms of tissue distribution, expressed in embryonic neural precursors including the dorsal median neuroblast, glial cells, neuropilar glial ring, developing myoblasts cells and in a circumferential band of epithelial cells at the trochanter/coxa boundary stripe in the developing limb.

The protein localises to the cell membrane. The protein resides in the cell junction. Its subcellular location is the gap junction. Functionally, structural components of the gap junctions. The sequence is that of Innexin inx1 (inx1) from Schistocerca americana (American grasshopper).